A 189-amino-acid polypeptide reads, in one-letter code: Apolipoprotein D (189 aa).

The N-terminal stretch at 1–20 is a signal peptide; the sequence is MVMLLLLLSALAGLFGAAEG. Gln21 is subject to Pyrrolidone carboxylic acid. 2 disulfide bridges follow: Cys28-Cys134 and Cys61-Cys185. N-linked (GlcNAc...) asparagine glycans are attached at residues Asn65 and Asn98.

Belongs to the calycin superfamily. Lipocalin family. Homodimer.

Its subcellular location is the secreted. APOD occurs in the macromolecular complex with lecithin-cholesterol acyltransferase. It is probably involved in the transport and binding of bilin. Appears to be able to transport a variety of ligands in a number of different contexts. This chain is Apolipoprotein D (APOD), found in Macaca fascicularis (Crab-eating macaque).